The primary structure comprises 440 residues: Transposon Ty1-LR2 Gag polyprotein (440 aa).

Polar residues-rich tracts occupy residues 1-23 (MESQ…SVTS), 48-60 (TKAN…TPAS), and 127-152 (QSQF…GNTF). Disordered regions lie at residues 1 to 93 (MESQ…MMTQ), 126 to 174 (PQSQ…PPPM), and 352 to 440 (GSRN…PGTY). The segment covering 153–165 (TDSSSADSDMTST) has biased composition (low complexity). The tract at residues 299–401 (NNGIHINNKV…NSKSKTARAH (103 aa)) is RNA-binding. Low complexity predominate over residues 402–418 (NVSTSNNSPSTDNDSIS). S416 carries the phosphoserine modification. Positions 419–428 (KSTTEPIQLN) are enriched in polar residues. A compositionally biased stretch (basic and acidic residues) spans 429–440 (NKHDLHLRPGTY).

As to quaternary structure, homotrimer.

The protein localises to the cytoplasm. Its function is as follows. Capsid protein (CA) is the structural component of the virus-like particle (VLP), forming the shell that encapsulates the retrotransposons dimeric RNA genome. The particles are assembled from trimer-clustered units and there are holes in the capsid shells that allow for the diffusion of macromolecules. CA also has nucleocapsid-like chaperone activity, promoting primer tRNA(i)-Met annealing to the multipartite primer-binding site (PBS), dimerization of Ty1 RNA and initiation of reverse transcription. The polypeptide is Transposon Ty1-LR2 Gag polyprotein (TY1A-LR2) (Saccharomyces cerevisiae (strain ATCC 204508 / S288c) (Baker's yeast)).